Consider the following 56-residue polypeptide: Ovomucoid (56 aa).

A Kazal-like domain is found at 6 to 56 (VDCSEYPKPACTMEQRPLCGSDNKTYGNKCNFCNAVVESNGTLTLSHFGKC). Cystine bridges form between Cys-8–Cys-38, Cys-16–Cys-35, and Cys-24–Cys-56. An N-linked (GlcNAc...) asparagine glycan is attached at Asn-45.

Its subcellular location is the secreted. The sequence is that of Ovomucoid from Afropavo congensis (Congo peafowl).